A 102-amino-acid chain; its full sequence is Amoebiasin-1 (102 aa).

The BC loop motif lies at 27 to 32; the sequence is NPTTGY. The short motif at 51-61 is the DE loop element; the sequence is DQHAPGICGCG. Residues 85-93 carry the FG loop motif; that stretch reads PWAPNANDR.

It belongs to the protease inhibitor I42 family. Monomer. During oxidative conditions, forms homooligomers; disulfide-linked. Interacts with cysteine protease CP2. Interacts with cysteine protease CP5. During oxidative conditions, cys-39, cys-58 and cys-60 react to form intra- and inter-molecular disulfide bonds resulting in the loss of the protein inhibitory activity.

The protein localises to the cytoplasm. Functionally, cysteine protease inhibitor. Inhibits cysteine proteases CP1, CP2 and CP5. May protect the cytosol against cysteine proteases released by damaged intracellular vesicles. This is Amoebiasin-1 from Entamoeba histolytica (strain ATCC 30459 / HM-1:IMSS / ABRM).